The primary structure comprises 24 residues: Pyruvate kinase (24 aa).

The protein belongs to the pyruvate kinase family. Homotetramer. The cofactor is Mg(2+). It depends on K(+) as a cofactor.

It carries out the reaction pyruvate + ATP = phosphoenolpyruvate + ADP + H(+). It functions in the pathway carbohydrate degradation; glycolysis; pyruvate from D-glyceraldehyde 3-phosphate: step 5/5. The polypeptide is Pyruvate kinase (pyk) (Clostridium pasteurianum).